Reading from the N-terminus, the 195-residue chain is Holliday junction branch migration complex subunit RuvA (195 aa).

Residues 1-66 (MNYLIFKVIY…LIIKDLYGFR (66 aa)) are domain I. The tract at residues 67–141 (TYNERLLFID…KYINKVNDKN (75 aa)) is domain II. Position 141 (asparagine 141) is a region of interest, flexible linker. The segment at 141 to 195 (NNWAKELSIGLENLGYTKKDIEYAITKVKINSQQDIDISEIISSAIKEISLRHEN) is domain III.

It belongs to the RuvA family. In terms of assembly, homotetramer. Forms an RuvA(8)-RuvB(12)-Holliday junction (HJ) complex. HJ DNA is sandwiched between 2 RuvA tetramers; dsDNA enters through RuvA and exits via RuvB. An RuvB hexamer assembles on each DNA strand where it exits the tetramer. Each RuvB hexamer is contacted by two RuvA subunits (via domain III) on 2 adjacent RuvB subunits; this complex drives branch migration. In the full resolvosome a probable DNA-RuvA(4)-RuvB(12)-RuvC(2) complex forms which resolves the HJ.

It localises to the cytoplasm. Functionally, the RuvA-RuvB-RuvC complex processes Holliday junction (HJ) DNA during genetic recombination and DNA repair, while the RuvA-RuvB complex plays an important role in the rescue of blocked DNA replication forks via replication fork reversal (RFR). RuvA specifically binds to HJ cruciform DNA, conferring on it an open structure. The RuvB hexamer acts as an ATP-dependent pump, pulling dsDNA into and through the RuvAB complex. HJ branch migration allows RuvC to scan DNA until it finds its consensus sequence, where it cleaves and resolves the cruciform DNA. The protein is Holliday junction branch migration complex subunit RuvA of Ureaplasma parvum serovar 3 (strain ATCC 27815 / 27 / NCTC 11736).